The chain runs to 260 residues: Putative hydro-lyase Dshi_0610 (260 aa).

Belongs to the D-glutamate cyclase family.

This chain is Putative hydro-lyase Dshi_0610, found in Dinoroseobacter shibae (strain DSM 16493 / NCIMB 14021 / DFL 12).